We begin with the raw amino-acid sequence, 693 residues long: Golgin subfamily A member 6A (693 aa).

Positions 14–611 form a coiled coil; it reads LEESRQNKLA…KLLELQELVL (598 aa). Disordered stretches follow at residues 20-69, 497-547, and 661-693; these read NKLA…PGDS, LPGE…GTEQ, and NVEP…MQDT. Over residues 54–69 the composition is skewed to polar residues; sequence SPETTTSGGCHSPGDS. Residues 537–547 are compositionally biased toward basic and acidic residues; that stretch reads LPKEKADGTEQ. A compositionally biased stretch (polar residues) spans 676–693; that stretch reads DNPTVQQIVQLSPVMQDT.

It belongs to the GOLGA6 family. Highly expressed in seminiferous tubes in testis. Highly expressed in spermatids, barely detectable in late pachytene spermatocytes, and not detectable in spermatogonia. Detected at intermediate levels in pancreas and lymph nodes, and at much lower levels in spleen, peripheral blood leukocytes, skeletal muscle, liver, lung, placenta, brain and heart.

The sequence is that of Golgin subfamily A member 6A (GOLGA6A) from Homo sapiens (Human).